The primary structure comprises 122 residues: Large ribosomal subunit protein bL12 (122 aa).

The protein belongs to the bacterial ribosomal protein bL12 family. As to quaternary structure, homodimer. Part of the ribosomal stalk of the 50S ribosomal subunit. Forms a multimeric L10(L12)X complex, where L10 forms an elongated spine to which 2 to 4 L12 dimers bind in a sequential fashion. Binds GTP-bound translation factors.

Functionally, forms part of the ribosomal stalk which helps the ribosome interact with GTP-bound translation factors. Is thus essential for accurate translation. This is Large ribosomal subunit protein bL12 from Shewanella putrefaciens (strain CN-32 / ATCC BAA-453).